We begin with the raw amino-acid sequence, 54 residues long: Ovomucoid (54 aa).

Residues 4–54 form the Kazal-like domain; it reads VDCSDYPKPVCSPENMPVCGSDSKTYSNKCDFCNAVADSNGTLTLSHFGKC. 3 cysteine pairs are disulfide-bonded: C6/C36, C14/C33, and C22/C54. N-linked (GlcNAc...) asparagine glycosylation occurs at N43.

The protein resides in the secreted. The sequence is that of Ovomucoid from Nycticorax nycticorax (Black-crowned night-heron).